A 248-amino-acid chain; its full sequence is Large ribosomal subunit protein bL9m (248 aa).

Residues 1-25 constitute a mitochondrion transit peptide; the sequence is MLKNIYVTPLNLLKSATSLQQQVRT.

Belongs to the bacterial ribosomal protein bL9 family. Component of the mitochondrial ribosome large subunit (39S) which comprises a 16S rRNA and about 50 distinct proteins.

The protein resides in the mitochondrion. The sequence is that of Large ribosomal subunit protein bL9m (mRpL9) from Drosophila melanogaster (Fruit fly).